The chain runs to 95 residues: Orphan antitoxin ParD2 (95 aa).

Functionally, antitoxin component of a non-functional type II toxin-antitoxin (TA system). Does not neutralize the effect of any of the RelE or ParE toxins. This chain is Orphan antitoxin ParD2 (parD2), found in Caulobacter vibrioides (strain ATCC 19089 / CIP 103742 / CB 15) (Caulobacter crescentus).